A 348-amino-acid polypeptide reads, in one-letter code: MLLSILVALCLCVRLALGVRGAPCEAVRIPMCRHMPWNITRMPNHLHHSTQENAILAIEQYEELVDVNCSSVLRFFLCAMYAPICTLEFLHDPIKPCKSVCQRARDDCEPLMKMYNHSWPESLACDELPVYDRGVCISPEAIVTDLPEDVKWIDITPDMMVQERSFDADCKHLSPDRCKCKKVKPTLATYLSKNYSYVIHAKIKAVQRSGCNEVTTVVDVKEIFKSSSPIPRTQVPLITNSSCQCPHILPHQDVLIMCYERRSRMMLLENCLVEKWRDQLSRRSTQWEERLQEQQRTTQDKKQIASRTSRSNPPKPKGRSPASKPASPKKNIKARSAPKKSNPKKSTS.

A signal peptide spans 1–18 (MLLSILVALCLCVRLALG). An FZ domain is found at 19-139 (VRGAPCEAVR…VYDRGVCISP (121 aa)). Cystine bridges form between cysteine 24–cysteine 85, cysteine 32–cysteine 78, cysteine 69–cysteine 108, cysteine 97–cysteine 136, and cysteine 101–cysteine 125. N-linked (GlcNAc...) asparagine glycosylation is found at asparagine 38 and asparagine 68. 3 N-linked (GlcNAc...) asparagine glycosylation sites follow: asparagine 116, asparagine 194, and asparagine 240. The NTR domain occupies 178-296 (CKCKKVKPTL…WEERLQEQQR (119 aa)). Positions 289–303 (ERLQEQQRTTQDKKQ) are enriched in basic and acidic residues. Residues 289 to 348 (ERLQEQQRTTQDKKQIASRTSRSNPPKPKGRSPASKPASPKKNIKARSAPKKSNPKKSTS) are disordered. Basic residues predominate over residues 330 to 348 (KNIKARSAPKKSNPKKSTS).

Belongs to the secreted frizzled-related protein (sFRP) family. In terms of tissue distribution, expressed in the involuting mammary gland, ovarian corpus luteum and prostate. In ovaries, low levels found in granulosa cells. High levels in corpora lutea of pregnant animals.

It localises to the secreted. Functionally, soluble frizzled-related proteins (sFRPS) function as modulators of Wnt signaling through direct interaction with Wnts. They have a role in regulating cell growth and differentiation in specific cell types. SFRP4 plays a role in bone morphogenesis. May also act as a regulator of adult uterine morphology and function. May also increase apoptosis during ovulation possibly through modulation of FZ1/FZ4/WNT4 signaling. Has phosphaturic effects by specifically inhibiting sodium-dependent phosphate uptake. The polypeptide is Secreted frizzled-related protein 4 (Sfrp4) (Rattus norvegicus (Rat)).